We begin with the raw amino-acid sequence, 280 residues long: Monoacylglycerol lipase (280 aa).

Catalysis depends on Ser111, which acts as the Nucleophile. Catalysis depends on charge relay system residues Asp227 and His257.

Belongs to the AB hydrolase superfamily.

Its subcellular location is the secreted. The protein resides in the cell wall. It catalyses the reaction Hydrolyzes glycerol monoesters of long-chain fatty acids.. Contributes to cell growth, probably by hydrolyzing exogenous lipids. Catalyzes the hydrolysis of monoacylglycerols (MAG) with fatty acid chains ranging from C14 to C18, with a maximum activity on monoolein. Is unable to hydrolyze long-chain diacylglycerol (DAG). In Mycolicibacterium smegmatis (strain ATCC 700084 / mc(2)155) (Mycobacterium smegmatis), this protein is Monoacylglycerol lipase.